Here is a 386-residue protein sequence, read N- to C-terminus: Putative F-box/kelch-repeat protein At3g17280 (386 aa).

In terms of domain architecture, F-box spans 1–48 (MTTISDLPYDLLPEILSRLPTKSIPKLKTTCKKWYALFKDPKFVEKKL). Kelch repeat units lie at residues 155–203 (SYKI…LKES) and 340–386 (RIYI…IVEV).

The chain is Putative F-box/kelch-repeat protein At3g17280 from Arabidopsis thaliana (Mouse-ear cress).